The chain runs to 270 residues: S-adenosylmethionine decarboxylase proenzyme (270 aa).

Serine 120 functions as the Schiff-base intermediate with substrate; via pyruvic acid in the catalytic mechanism. Serine 120 is modified (pyruvic acid (Ser); by autocatalysis). The active-site Proton acceptor; for processing activity is histidine 125. The active-site Proton donor; for catalytic activity is the cysteine 148.

Belongs to the prokaryotic AdoMetDC family. Type 2 subfamily. Heterooctamer of four alpha and four beta chains arranged as a tetramer of alpha/beta heterodimers. The cofactor is pyruvate. Post-translationally, is synthesized initially as an inactive proenzyme. Formation of the active enzyme involves a self-maturation process in which the active site pyruvoyl group is generated from an internal serine residue via an autocatalytic post-translational modification. Two non-identical subunits are generated from the proenzyme in this reaction, and the pyruvate is formed at the N-terminus of the alpha chain, which is derived from the carboxyl end of the proenzyme. The post-translation cleavage follows an unusual pathway, termed non-hydrolytic serinolysis, in which the side chain hydroxyl group of the serine supplies its oxygen atom to form the C-terminus of the beta chain, while the remainder of the serine residue undergoes an oxidative deamination to produce ammonia and the pyruvoyl group blocking the N-terminus of the alpha chain.

It carries out the reaction S-adenosyl-L-methionine + H(+) = S-adenosyl 3-(methylsulfanyl)propylamine + CO2. The protein operates within amine and polyamine biosynthesis; S-adenosylmethioninamine biosynthesis; S-adenosylmethioninamine from S-adenosyl-L-methionine: step 1/1. Catalyzes the decarboxylation of S-adenosylmethionine to S-adenosylmethioninamine (dcAdoMet), the propylamine donor required for the synthesis of the polyamines spermine and spermidine from the diamine putrescine. This chain is S-adenosylmethionine decarboxylase proenzyme, found in Alkaliphilus oremlandii (strain OhILAs) (Clostridium oremlandii (strain OhILAs)).